Reading from the N-terminus, the 640-residue chain is (Z)-beta-ocimene synthase TPS13PK, chloroplastic (640 aa).

The transit peptide at 1–95 (MAALVSTVSS…PFKDEAYVKR (95 aa)) directs the protein to the chloroplast. A disordered region spans residues 50-69 (MSTNNNNNNNQKNSSRRSAN). Residues 60–69 (QKNSSRRSAN) show a composition bias toward polar residues. (2E)-geranyl diphosphate-binding residues include R334, D371, D375, R515, and D518. 2 residues coordinate Mg(2+): D371 and D375. The DDXXD motif motif lies at 371 to 375 (DDIYD). Mg(2+) contacts are provided by D518, T522, and E526.

It belongs to the terpene synthase family. In terms of assembly, monomer. It depends on Mg(2+) as a cofactor.

The protein localises to the plastid. It is found in the chloroplast. It catalyses the reaction (2E)-geranyl diphosphate = (Z)-beta-ocimene + diphosphate. Its pathway is secondary metabolite biosynthesis; terpenoid biosynthesis. In terms of biological role, involved in monoterpene (C10) olefins biosynthesis, constituants of cannabinoids and terpenoids-rich resins. Catalyzes mainly the conversion of (2E)-geranyl diphosphate to (Z)-beta-ocimene. This chain is (Z)-beta-ocimene synthase TPS13PK, chloroplastic, found in Cannabis sativa (Hemp).